The primary structure comprises 352 residues: Glycoprotein integral membrane protein 1 (352 aa).

Positions methionine 1–serine 25 are cleaved as a signal peptide. Topologically, residues lysine 26–valine 281 are extracellular. Asparagine 36, asparagine 44, asparagine 89, asparagine 109, asparagine 151, and asparagine 197 each carry an N-linked (GlcNAc...) asparagine glycan. Residues asparagine 206–serine 245 are disordered. Residues leucine 225–aspartate 244 show a composition bias toward basic and acidic residues. A helical membrane pass occupies residues proline 282 to isoleucine 302. The Cytoplasmic portion of the chain corresponds to lysine 303–lysine 352.

The protein localises to the membrane. The chain is Glycoprotein integral membrane protein 1 (ginm1) from Danio rerio (Zebrafish).